We begin with the raw amino-acid sequence, 681 residues long: UvrABC system protein C (681 aa).

A disordered region spans residues 1-23; the sequence is MNGKKLPDGGILFDETDDEDDDA. A compositionally biased stretch (acidic residues) spans 14–23; it reads DETDDEDDDA. Residues 67–145 enclose the GIY-YIG domain; that stretch reads NSPGVYRMFN…IKRLRPRFNV (79 aa). Positions 255-290 constitute a UVR domain; sequence QAVKTAIARQMNEASEDLDFERAAIYRDRLAALSHV.

The protein belongs to the UvrC family. Interacts with UvrB in an incision complex.

Its subcellular location is the cytoplasm. The UvrABC repair system catalyzes the recognition and processing of DNA lesions. UvrC both incises the 5' and 3' sides of the lesion. The N-terminal half is responsible for the 3' incision and the C-terminal half is responsible for the 5' incision. This chain is UvrABC system protein C, found in Agrobacterium fabrum (strain C58 / ATCC 33970) (Agrobacterium tumefaciens (strain C58)).